A 109-amino-acid polypeptide reads, in one-letter code: Small ribosomal subunit protein bS6 (109 aa).

Belongs to the bacterial ribosomal protein bS6 family.

Its function is as follows. Binds together with bS18 to 16S ribosomal RNA. This is Small ribosomal subunit protein bS6 from Anaplasma marginale (strain St. Maries).